The sequence spans 347 residues: MNPMILLMLLITILSGTSIVMMSSHWFLTWLGFEMNMMAMIPVLMKKYNPRAMEAATKYFLTQATASMILVLGIIINLIHSGQWTIMAMESYSASTLLTIALVMKLGLAPFHFWVPEVTQGVSLNSGLILLTWQKIAPLSLLYQIYSSVNTNILLVMSLLSIMVGGWGGLNQTQLRKIMAYSSIAHMGWMIMIMIYNPNLSLLNLLIYILMTSSMFMLLMFNSTISTLALSRTWNINPIITTTILIILLSLGGLPPLSGFMPKWMIIQELTKNDSVILPAVMAILALLNLFFYMRLAYSSSLTMFPTTNNTKMVWQFQPMNVSFMMTSLISISIMALPLTPLAMILY.

11 consecutive transmembrane segments (helical) span residues 3 to 23, 25 to 45, 59 to 79, 96 to 116, 122 to 142, 149 to 169, 178 to 198, 201 to 221, 239 to 259, 274 to 294, and 326 to 346; these read PMIL…VMMS, HWFL…PVLM, YFLT…INLI, TLLT…FWVP, VSLN…LSLL, VNTN…GWGG, IMAY…IYNP, SLLN…LLMF, IITT…PLSG, DSVI…FFYM, and MTSL…AMIL.

Belongs to the complex I subunit 2 family. As to quaternary structure, core subunit of respiratory chain NADH dehydrogenase (Complex I) which is composed of 45 different subunits. Interacts with TMEM242.

It is found in the mitochondrion inner membrane. The catalysed reaction is a ubiquinone + NADH + 5 H(+)(in) = a ubiquinol + NAD(+) + 4 H(+)(out). In terms of biological role, core subunit of the mitochondrial membrane respiratory chain NADH dehydrogenase (Complex I) which catalyzes electron transfer from NADH through the respiratory chain, using ubiquinone as an electron acceptor. Essential for the catalytic activity and assembly of complex I. The protein is NADH-ubiquinone oxidoreductase chain 2 of Sylvisorex johnstoni (Johnston's forest shrew).